Reading from the N-terminus, the 245-residue chain is Probable phosphatase PC1_1798 (245 aa).

The Zn(2+) site is built by H7, H9, H15, H40, E73, H101, H131, D192, and H194.

Belongs to the PHP family. In terms of assembly, homotrimer. It depends on Zn(2+) as a cofactor.

This chain is Probable phosphatase PC1_1798, found in Pectobacterium carotovorum subsp. carotovorum (strain PC1).